The chain runs to 138 residues: Acidic phospholipase A2 BmooPLA2 (138 aa).

Positions 1-16 (MRTLWIVAVLLLGVEG) are cleaved as a signal peptide. Cystine bridges form between Cys-42–Cys-131, Cys-44–Cys-60, Cys-59–Cys-111, Cys-65–Cys-138, Cys-66–Cys-104, Cys-73–Cys-97, and Cys-91–Cys-102. Positions 43, 45, and 47 each coordinate Ca(2+). The active site involves His-63. Position 64 (Asp-64) interacts with Ca(2+). Asp-105 is an active-site residue.

Belongs to the phospholipase A2 family. Group II subfamily. D49 sub-subfamily. Ca(2+) serves as cofactor. As to expression, expressed by the venom gland.

The protein localises to the secreted. The catalysed reaction is a 1,2-diacyl-sn-glycero-3-phosphocholine + H2O = a 1-acyl-sn-glycero-3-phosphocholine + a fatty acid + H(+). Functionally, snake venom phospholipase A2 (PLA2) that inhibits ADP- and collagen-induced platelet aggregation, has edema-inducing, anti-coagulant activity, antibacterial activity, and cytotoxic activity. In vivo, has a hypotensive effect. PLA2 catalyzes the calcium-dependent hydrolysis of the 2-acyl groups in 3-sn-phosphoglycerides. The protein is Acidic phospholipase A2 BmooPLA2 of Bothrops moojeni (Lance-headed viper).